The primary structure comprises 199 residues: MTEKEKMLAEKWYDANFDQDLINERARAKDICFELNHTKPSDKNKRKELIDELFQTTTDNVSISIPFDTDYGWNVKLGKNVYVNTNCYFMDGGQITIGDNVFIGPNCGFYTATHPLNFHHRNEGFEKAGPINIGSNTWFGGHVAVLPGVTIGEGSVIGAGSVVTKDIPPHSLAVGNPCKVVRKIDNEVPSEALNDETLN.

The protein belongs to the transferase hexapeptide repeat family.

This chain is Putative acetyltransferase SAR2635, found in Staphylococcus aureus (strain MRSA252).